A 235-amino-acid chain; its full sequence is Peptidyl-tRNA hydrolase (235 aa).

Tyr-14 is a tRNA binding site. The active-site Proton acceptor is His-19. TRNA-binding residues include Phe-64, Asn-66, and Asn-112. Residues 186-235 (RTAPPRSSGGSPKTDKPAKATREPPPAAKPEATPEEETRSPLQRLVDKFR) are disordered. Over residues 198–207 (KTDKPAKATR) the composition is skewed to basic and acidic residues.

The protein belongs to the PTH family. As to quaternary structure, monomer.

It localises to the cytoplasm. The enzyme catalyses an N-acyl-L-alpha-aminoacyl-tRNA + H2O = an N-acyl-L-amino acid + a tRNA + H(+). Hydrolyzes ribosome-free peptidyl-tRNAs (with 1 or more amino acids incorporated), which drop off the ribosome during protein synthesis, or as a result of ribosome stalling. Its function is as follows. Catalyzes the release of premature peptidyl moieties from peptidyl-tRNA molecules trapped in stalled 50S ribosomal subunits, and thus maintains levels of free tRNAs and 50S ribosomes. In Dinoroseobacter shibae (strain DSM 16493 / NCIMB 14021 / DFL 12), this protein is Peptidyl-tRNA hydrolase.